Reading from the N-terminus, the 237-residue chain is MALKDLPADAQPREKLLARGPATLADAELLAILLRTGIMGKGVLQMAQELLDPPGVDAATGQPTGGFGGIAGLLHASAADLERIKGLGPAKRAELVAVLELARRALAQQLRECAVFDTPDAVKHYLQLQLAAKGHEVFAVLFLDNQNRLLAMEELFRGTLTQTSVYPREVVLHALHHRAAAVVLAHNHPSGSVQPSRADEALTQTLKSTLALVDVRVLDHVIVAPGQALSMAEMGLL.

In terms of domain architecture, MPN spans 115–237; sequence VFDTPDAVKH…ALSMAEMGLL (123 aa). Zn(2+) contacts are provided by His186, His188, and Asp199. The JAMM motif motif lies at 186-199; that stretch reads HNHPSGSVQPSRAD.

This sequence belongs to the UPF0758 family.

This chain is UPF0758 protein Veis_1654, found in Verminephrobacter eiseniae (strain EF01-2).